The sequence spans 908 residues: NADH-quinone oxidoreductase subunit G (908 aa).

The 2Fe-2S ferredoxin-type domain occupies 2–83; the sequence is ATIHVDGKEY…GTFISIDDEE (82 aa). [2Fe-2S] cluster contacts are provided by C34, C45, C48, and C67. A 4Fe-4S His(Cys)3-ligated-type domain is found at 83–122; it reads EAKQFRESVVEWLMTNHPHDCPVCEEGGNCHLQDMTVMTG. [4Fe-4S] cluster-binding residues include H99, C103, C106, C112, C151, C154, C157, C201, C228, C231, C235, and C263. The 4Fe-4S Mo/W bis-MGD-type domain occupies 221–277; it reads MQFAPSICQQCSIGCNISPGERYGELRRIENRYNGTVNHYFLCDRGRFGYGYVNLKD.

This sequence belongs to the complex I 75 kDa subunit family. Composed of 13 different subunits. Subunits NuoCD, E, F, and G constitute the peripheral sector of the complex. [2Fe-2S] cluster serves as cofactor. The cofactor is [4Fe-4S] cluster.

The catalysed reaction is a quinone + NADH + 5 H(+)(in) = a quinol + NAD(+) + 4 H(+)(out). Functionally, NDH-1 shuttles electrons from NADH, via FMN and iron-sulfur (Fe-S) centers, to quinones in the respiratory chain. The immediate electron acceptor for the enzyme in this species is believed to be ubiquinone. Couples the redox reaction to proton translocation (for every two electrons transferred, four hydrogen ions are translocated across the cytoplasmic membrane), and thus conserves the redox energy in a proton gradient. The protein is NADH-quinone oxidoreductase subunit G (nuoG) of Shigella flexneri.